Reading from the N-terminus, the 1063-residue chain is Valine--tRNA ligase, mitochondrial (1063 aa).

The N-terminal 26 residues, 1–26 (MPHLPLASFRPPFWGLRHSRGLPRFH), are a transit peptide targeting the mitochondrion. The disordered stretch occupies residues 25–53 (FHSVSTQSEPHGSPISRRNREAKQKRLRE). Basic and acidic residues predominate over residues 42–53 (RNREAKQKRLRE). The short motif at 146–156 (PNVTGSLHIGH) is the 'HIGH' region element. The 'KMSKS' region motif lies at 658 to 662 (KMSKS). ATP is bound at residue Lys-661.

It belongs to the class-I aminoacyl-tRNA synthetase family.

Its subcellular location is the mitochondrion. The catalysed reaction is tRNA(Val) + L-valine + ATP = L-valyl-tRNA(Val) + AMP + diphosphate. Catalyzes the attachment of valine to tRNA(Val) in a two-step reaction: valine is first activated by ATP to form Val-AMP and then transferred to the acceptor end of tRNA(Val). In Homo sapiens (Human), this protein is Valine--tRNA ligase, mitochondrial (VARS2).